The sequence spans 500 residues: Protein FAM83F (500 aa).

Residue Ala-2 is modified to N-acetylalanine. The segment at 2–300 (AESQLNCLDE…LYAISEEVDL (299 aa)) is DUF1669. Ser-4 carries the phosphoserine modification. Disordered regions lie at residues 82 to 109 (NARG…AYWP), 347 to 366 (QQRE…SGGE), and 391 to 500 (IPLG…CVIS). Residues 397 to 419 (SQKDGRMVSHMHRDLKPKSREAP) show a composition bias toward basic and acidic residues. 2 stretches are compositionally biased toward low complexity: residues 425–442 (GEAA…SSRL) and 458–468 (SSVSTETSEVE). The segment covering 477–500 (ENSSADISGKTSPSSAKPSNCVIS) has biased composition (polar residues). Ser-479 is modified (phosphoserine).

It belongs to the FAM83 family. In terms of assembly, directly interacts (via DUF1669) with CSNK1A1 and CSNK1A1L.

The protein localises to the cell membrane. The protein is Protein FAM83F (FAM83F) of Homo sapiens (Human).